Consider the following 328-residue polypeptide: MSKPARRVAVTGAAGQIAYSLLFRIARGDLLGDDQPVILQLLELPHALDALRGVVMELEDCAFPLLQSVEISDDPRVAFRDADYAMLVGSRPRGKGMERRDLLAANAAIFRSQGEALNEVANRQVKVLVVGNPANTNAWVARHYAPDLPADAITAMIRLDHNRAVSKLAARCGVTVDAVSRMAVWGNHSPTMFPDYRHALIDQQPAPMRVGDERWYLDTFIPEVARRGTAIIEARGASSAASAANAAIDQMRDWIRGSGGRWVSMSIVSGGEYGIPRGLMFGMPTICSEGRYRVVPDLEIDALARARIDASVAELVDEMQAVRAILAL.

NAD(+) is bound at residue 12–18 (GAAGQIA). Substrate is bound by residues R93 and R99. Residues N106, Q113, and 130-132 (VGN) contribute to the NAD(+) site. The substrate site is built by N132 and R163. H188 functions as the Proton acceptor in the catalytic mechanism.

Belongs to the LDH/MDH superfamily. MDH type 2 family.

The catalysed reaction is (S)-malate + NAD(+) = oxaloacetate + NADH + H(+). Functionally, catalyzes the reversible oxidation of malate to oxaloacetate. This Burkholderia vietnamiensis (strain G4 / LMG 22486) (Burkholderia cepacia (strain R1808)) protein is Malate dehydrogenase 1.